A 495-amino-acid chain; its full sequence is Flagellin (495 aa).

Belongs to the bacterial flagellin family.

It localises to the secreted. It is found in the bacterial flagellum. Its function is as follows. Flagellin is the subunit protein which polymerizes to form the filaments of bacterial flagella. This Salmonella typhimurium (strain LT2 / SGSC1412 / ATCC 700720) protein is Flagellin (fliC).